A 461-amino-acid polypeptide reads, in one-letter code: Phosphatidate cytidylyltransferase 1 (461 aa).

A disordered region spans residues 1-68; that stretch reads MLELRHRGGC…PEVPPSSDRT (68 aa). Residue arginine 7 is modified to Omega-N-methylarginine. Over residues 22–56 the composition is skewed to basic and acidic residues; that stretch reads REGEAAGGDHETESTSDKETDIDDRYGDLDARGDS. A phosphoserine mark is found at serine 35 and serine 37. The next 6 helical transmembrane spans lie at 96–116, 149–169, 183–203, 230–250, 279–299, and 357–377; these read MISLFFLIIYMGSFMLMLLVL, FLLCVNYFFYGETVADYFATF, HRFISFALYLAGFCMFVLSLV, LVIQNLFEGMIWFLVPISSVI, GFIGGFFSTVIFGFIAAYVLS, and IALSTFASLIGPFGGFFASGF.

The protein belongs to the CDS family. Homodimer. Interacts with FOS; this interaction may enhance catalytic activity. The cofactor is Mg(2+). In terms of tissue distribution, brain, retina and testis. Found in cerebellar Purkinje cells, pineal body, inner segment of photoreceptor cells and postmitotic spermatocytes and spermatids.

The protein localises to the endoplasmic reticulum membrane. The catalysed reaction is a 1,2-diacyl-sn-glycero-3-phosphate + CTP + H(+) = a CDP-1,2-diacyl-sn-glycerol + diphosphate. It catalyses the reaction 1-octadecanoyl-2-(5Z,8Z,11Z,14Z-eicosatetraenoyl)-sn-glycero-3-phosphate + CTP + H(+) = 1-octadecanoyl-2-(5Z,8Z,11Z,14Z-eicosatetraenoyl)-sn-glycero-3-cytidine-5'-diphosphate + diphosphate. The enzyme catalyses 1-octadecanoyl-2-(9Z,12Z-octadecadienoyl)-sn-glycero-3-phosphate + CTP + H(+) = 1-octadecanoyl-2-(9Z,12Z-octadecadienoyl)-sn-glycero-3-cytidine-5'-diphosphate + diphosphate. It carries out the reaction 1-hexadecanoyl-2-(5Z,8Z,11Z,14Z-eicosatetraenoyl)-sn-glycero-3-phosphate + CTP + H(+) = 1-hexadecanoyl-2-(5Z,8Z,11Z,14Z-eicosatetraenoyl)-sn-glycero-3-cytidine-5'-diphosphate + diphosphate. The catalysed reaction is 1,2-di-(5Z,8Z,11Z,14Z)-eicosatetraenoyl-sn-glycero-3-phosphate + CTP + H(+) = 1,2-di-(5Z,8Z,11Z,14Z-eicosatetraenoyl)-sn-glycero-3-cytidine-5'-diphosphate + diphosphate. It catalyses the reaction 1-octadecanoyl-2-(9Z-octadecenoyl)-sn-glycero-3-phosphate + CTP + H(+) = 1-octadecanoyl-2-(9Z-octadecenoyl)-sn-glycero-3-cytidine-5'-diphosphate + diphosphate. The enzyme catalyses 1-octadecanoyl-2-(4Z,7Z,10Z,13Z,16Z,19Z-docosahexaenoyl)-sn-glycero-3-phosphate + CTP + H(+) = 1-octadecanoyl-2-(4Z,7Z,10Z,13Z,16Z,19Z-docosahexaenoyl)-sn-glycero-3-cytidine-5'-diphosphate + diphosphate. It carries out the reaction 1,2-di-(9Z,12Z-octadecadienoyl)-sn-glycero-3-phosphate + CTP + H(+) = 1,2-di-(9Z,12Z-octadecadienoyl)-sn-glycero-3-cytidine-5'-diphosphate + diphosphate. The catalysed reaction is 1,2-di-(9Z-octadecenoyl)-sn-glycero-3-phosphate + CTP + H(+) = 1,2-di-(9Z-octadecenoyl)-sn-glycero-3-cytidine-5'-diphosphate + diphosphate. Its pathway is phospholipid metabolism; CDP-diacylglycerol biosynthesis; CDP-diacylglycerol from sn-glycerol 3-phosphate: step 3/3. With respect to regulation, activated by GTP. Inhibited by CDP-diacylglycerol and by phosphatidylglycerol 4,5-bisphosphate (PPI2). Its function is as follows. Catalyzes the conversion of phosphatidic acid (PA) to CDP-diacylglycerol (CDP-DAG), an essential intermediate in the synthesis of phosphatidylglycerol, cardiolipin and phosphatidylinositol. Exhibits almost no acyl chain preference for PA, showing no discrimination for the sn-1/sn-2 acyl chain composition of PAs. Plays an important role in regulatinng the growth of lipid droplets which are storage organelles at the center of lipid and energy homeostasis. Positively regulates the differentiation and development of adipocytes. The chain is Phosphatidate cytidylyltransferase 1 from Rattus norvegicus (Rat).